A 544-amino-acid chain; its full sequence is MEESTAPIEAHAAAGAEAGAEGGEGVSVPPPPQFEAAGASAGVSSAPLQQASGLAPLLVTPGPAIRRAASLRPAPAEGGGARSGPERNSGSWTKQILCRYYLHGQCKEGDNCRYSHDLSGRRRSRGGQDAQPRASADRGPKMATRWEPPTQEVAEAPPAASSSSLPLIGSAAERGFTEAEIDNAGIRSAAERGFSEAEIDNASLAAGAAAGAGAEGWEGAIEFVPGQPYRGRMVPPHGPEAPLQSPAIEREHMAMGMGMPMPVPMPMPVPMPVPMPLPLCRYAARGQCLRGDRCAYPHGEICDMCGQQALHPWDAAQQEAHRRACVEAHERDMELSFAVQRSMDKVCGICMEVVYEKADPSDRRFGILFSCNHTYCLRCIRRWRSATQFENRISKSCPQCRVSSGFVIPSEFWVEEEEEKEKLVQQYKEGMSQKACRYFAGGLGHCPFGEFCFYKHEYPEGWRDQPPRPDGGGSSSAYWHQVLEPVQLREGNVLFKSRKKEHSVLRLANQLLKKLLCLRGSSSFSDDRWLLLQYQLEEYFSLNL.

Disordered regions lie at residues 1–46 and 117–144; these read MEES…VSSA and DLSG…KMAT. 2 stretches are compositionally biased toward low complexity: residues 9-19 and 36-46; these read EAHAAAGAEAG and AAGASAGVSSA. 2 consecutive C3H1-type zinc fingers follow at residues 92-119 and 274-301; these read WTKQ…HDLS and PMPL…HGEI. The segment at 302-329 is makorin-type Cys-His; the sequence is CDMCGQQALHPWDAAQQEAHRRACVEAH. The RING-type zinc finger occupies 347–401; sequence CGICMEVVYEKADPSDRRFGILFSCNHTYCLRCIRRWRSATQFENRISKSCPQCR. Residues 430-459 form a C3H1-type 3 zinc finger; it reads GMSQKACRYFAGGLGHCPFGEFCFYKHEYP.

As to expression, mainly expressed in mouse brain and reproductive system including testis and ovary. Ubiquitously detected at low levels throughout the entire embryo, but expression is highest in the ventricular layers of the brain.

Its subcellular location is the nucleus. It catalyses the reaction S-ubiquitinyl-[E2 ubiquitin-conjugating enzyme]-L-cysteine + [acceptor protein]-L-lysine = [E2 ubiquitin-conjugating enzyme]-L-cysteine + N(6)-ubiquitinyl-[acceptor protein]-L-lysine.. It participates in protein modification; protein ubiquitination. E3 ubiquitin ligase catalyzing the covalent attachment of ubiquitin moieties onto substrate proteins. Acts as a key developmental timer that helps ensure puberty begins at the appropriate age, by inhibiting premature activation of the reproductive hormone cascade. Epigenetically regulates GNRH1 transcription by disrupting the binding of methyl-DNA binding protein 3/MBD3 to the promoter of GNRH1. Mechanistically, mediates the non-proteolytic ubiquitination of MBD3 at multiple sites with 'Lys27' ubiquitin linkages and thereby regulates the methylation status of the genome, including GNRH1 promoter. Modulates the stability and translation of GNRH1 mRNA by mediating the non-proteolytic ubiquitination of PABP family members PABPC1, PABPC3 and PABPC4 at multiple sites. Also participates in the maintenance of genomic and epigenomic stability by regulating the abundance of APEX2 via 'Lys-48'-linked ubiquitination. In Mus musculus (Mouse), this protein is E3 ubiquitin-protein ligase makorin-3 (Mkrn3).